Here is a 304-residue protein sequence, read N- to C-terminus: Probable aspartoacylase (304 aa).

Positions 13 and 16 each coordinate Zn(2+). Substrate-binding positions include Arg-55 and 62 to 63 (NR). His-105 lines the Zn(2+) pocket. 2 residues coordinate substrate: Glu-163 and Tyr-273.

The protein belongs to the AspA/AstE family. Aspartoacylase subfamily. Zn(2+) is required as a cofactor.

The catalysed reaction is an N-acyl-L-aspartate + H2O = a carboxylate + L-aspartate. The chain is Probable aspartoacylase from Prochlorococcus marinus (strain MIT 9313).